The sequence spans 357 residues: Heat-inducible transcription repressor HrcA (357 aa).

The protein belongs to the HrcA family.

Negative regulator of class I heat shock genes (grpE-dnaK-dnaJ and groELS operons). Prevents heat-shock induction of these operons. This chain is Heat-inducible transcription repressor HrcA, found in Ureaplasma parvum serovar 3 (strain ATCC 27815 / 27 / NCTC 11736).